Consider the following 193-residue polypeptide: dCTP deaminase (193 aa).

Residues 110–115 (RSSLAR), aspartate 128, 136–138 (VLE), tyrosine 171, lysine 178, and glutamine 182 contribute to the dCTP site. Glutamate 138 serves as the catalytic Proton donor/acceptor.

The protein belongs to the dCTP deaminase family. As to quaternary structure, homotrimer.

It catalyses the reaction dCTP + H2O + H(+) = dUTP + NH4(+). It functions in the pathway pyrimidine metabolism; dUMP biosynthesis; dUMP from dCTP (dUTP route): step 1/2. Its function is as follows. Catalyzes the deamination of dCTP to dUTP. This chain is dCTP deaminase, found in Aeromonas salmonicida (strain A449).